A 220-amino-acid polypeptide reads, in one-letter code: uncharacterized protein (220 aa).

Helical transmembrane passes span 6–26 (FSIL…LIVW), 33–53 (IVRL…LRGI), 59–79 (ALIA…PWLL), 103–123 (LLIT…VVNL), 126–146 (GVTI…LFVM), 157–177 (AGFL…TAGV), and 179–199 (LIVE…IGVL).

The protein resides in the cell membrane. This is an uncharacterized protein from Mycobacterium tuberculosis (strain ATCC 25618 / H37Rv).